We begin with the raw amino-acid sequence, 34 residues long: Ornithine carbamoyltransferase, catabolic (34 aa).

It belongs to the aspartate/ornithine carbamoyltransferase superfamily. OTCase family. In terms of assembly, probably nonameric or dodecameric.

It localises to the cytoplasm. It carries out the reaction carbamoyl phosphate + L-ornithine = L-citrulline + phosphate + H(+). The protein operates within amino-acid degradation; L-arginine degradation via ADI pathway; carbamoyl phosphate from L-arginine: step 2/2. The protein is Ornithine carbamoyltransferase, catabolic (arcB) of Pseudomonas putida (Arthrobacter siderocapsulatus).